Reading from the N-terminus, the 162-residue chain is V-type proton ATPase subunit c' (162 aa).

Residues 1-11 lie on the Lumenal side of the membrane; it reads MSSNLCPIYSS. Residues 12–32 form a helical membrane-spanning segment; the sequence is FFGFAGVCASMVFSCLGAGYG. Over 33–54 the chain is Cytoplasmic; the sequence is TALAGRGIAAVGAFRPEIVMKS. The chain crosses the membrane as a helical span at residues 55 to 75; it reads LIPVVMSGIIGVYGLVMSVLI. Topologically, residues 76–93 are lumenal; that stretch reads AGDMSPDNDYSLFSGFIH. A helical membrane pass occupies residues 94–114; the sequence is LSAGLAVGLTGVAAGYAIGVV. The Cytoplasmic segment spans residues 115-132; sequence GDRGVQSFMRQDRIFVSM. Residues 133-153 form a helical membrane-spanning segment; sequence VLILIFAEVLGLYGLIVGLIL. Residues 154–162 lie on the Lumenal side of the membrane; it reads QTKTSNVCY.

The protein belongs to the V-ATPase proteolipid subunit family. V-ATPase is a heteromultimeric enzyme composed of a peripheral catalytic V1 complex (components A to H) attached to an integral membrane V0 proton pore complex (components: a, c, c', c'', d, e, f and VOA1). The decameric c-ring forms the proton-conducting pore, and is composed of eight proteolipid subunits c, one subunit c' and one subunit c''.

Its subcellular location is the vacuole membrane. Its function is as follows. Proton-conducting pore forming subunit of the V0 complex of vacuolar(H+)-ATPase (V-ATPase), a multisubunit enzyme composed of a peripheral complex (V1) that hydrolyzes ATP and a membrane integral complex (V0) that translocates protons. V-ATPase is responsible for acidifying and maintaining the pH of intracellular compartments. This Schizosaccharomyces pombe (strain 972 / ATCC 24843) (Fission yeast) protein is V-type proton ATPase subunit c'.